We begin with the raw amino-acid sequence, 96 residues long: Co-chaperonin GroES (96 aa).

It belongs to the GroES chaperonin family. As to quaternary structure, heptamer of 7 subunits arranged in a ring. Interacts with the chaperonin GroEL.

The protein resides in the cytoplasm. Functionally, together with the chaperonin GroEL, plays an essential role in assisting protein folding. The GroEL-GroES system forms a nano-cage that allows encapsulation of the non-native substrate proteins and provides a physical environment optimized to promote and accelerate protein folding. GroES binds to the apical surface of the GroEL ring, thereby capping the opening of the GroEL channel. The sequence is that of Co-chaperonin GroES from Shewanella halifaxensis (strain HAW-EB4).